The chain runs to 591 residues: MESIMEEADSYIEYVSVAERRAIAAQKILQRKGKASELEEEADKEKLAEAKPSLLVQATQLKRDVPEVSATEQIILQEKEMMEHLSDKKTLMSVRELAKGITYTEPLLTGWKPPLHIRKMSSKQRDLIRKQWHIIVNGDDIPPPIKNFKDMKFPRPVLDTLKEKGIVQPTPIQVQGLPVILAGRDMIGIAFTGSGKTLVFVLPMIMIALQEEMMMPIAAGEGPIGLIVCPSRELARQTYEVVEQFVAPLVEAGYPPLRSLLCIGGIDMRSQLEVVKRGVHIVVATPGRLKDMLAKKKMSLDACRYLTLDEADRLVDLGFEDDIREVFDHFKSQRQTLLFSATMPTKIQIFARSALVKPVTVNVGRAGAANLDVIQEVEYVKQEAKIVYLLECLQKTSPPVLIFCENKADVDDIHEYLLLKGVEAVAIHGGKDQEDREYAISSFKAGKKDVLVATDVASKGLDFPDIQHVINYDMPAEIENYVHRIGRTGRCGKTGIATTFINKNQSETTLLDLKHLLQEAKQRIPPVLAELNDPMEEAETIANASGVKGCAYCGGLGHRIRDCPKLEHQKSVAISNSRKDYFGSGGYRGEI.

Positions 146-174 (KNFKDMKFPRPVLDTLKEKGIVQPTPIQV) match the Q motif motif. The region spanning 177-361 (LPVILAGRDM…RSALVKPVTV (185 aa)) is the Helicase ATP-binding domain. 190–197 (AFTGSGKT) contacts ATP. The short motif at 309-312 (DEAD) is the DEAD box element. The 161-residue stretch at 372–532 (DVIQEVEYVK…RIPPVLAELN (161 aa)) folds into the Helicase C-terminal domain. The CCHC-type zinc finger occupies 548–565 (KGCAYCGGLGHRIRDCPK).

The protein belongs to the DEAD box helicase family. DDX41 subfamily.

It catalyses the reaction ATP + H2O = ADP + phosphate + H(+). The sequence is that of DEAD-box ATP-dependent RNA helicase 35 (RH35) from Arabidopsis thaliana (Mouse-ear cress).